A 339-amino-acid chain; its full sequence is Cathepsin B (339 aa).

The first 17 residues, 1 to 17 (MWWLWASLCCLLALGDA), serve as a signal peptide directing secretion. Positions 18–79 (RSRPSFHPLS…QRVMFTEDLK (62 aa)) are cleaved as a propeptide — activation peptide. Disulfide bonds link cysteine 93/cysteine 122, cysteine 105/cysteine 150, cysteine 141/cysteine 207, cysteine 142/cysteine 146, cysteine 179/cysteine 211, and cysteine 187/cysteine 198. Cysteine 108 is a catalytic residue. N-linked (GlcNAc...) asparagine glycosylation occurs at asparagine 192. Lysine 220 is subject to N6-acetyllysine. Active-site residues include histidine 278 and asparagine 298. A propeptide spanning residues 334 to 339 (QYWEKI) is cleaved from the precursor.

It belongs to the peptidase C1 family. Dimer of a heavy chain and a light chain cross-linked by a disulfide bond. Interacts with SRPX2. Directly interacts with SHKBP1.

The protein resides in the lysosome. Its subcellular location is the melanosome. The protein localises to the secreted. It is found in the extracellular space. It localises to the apical cell membrane. The enzyme catalyses Hydrolysis of proteins with broad specificity for peptide bonds. Preferentially cleaves -Arg-Arg-|-Xaa bonds in small molecule substrates (thus differing from cathepsin L). In addition to being an endopeptidase, shows peptidyl-dipeptidase activity, liberating C-terminal dipeptides.. Functionally, thiol protease which is believed to participate in intracellular degradation and turnover of proteins. Cleaves matrix extracellular phosphoglycoprotein MEPE. Involved in the solubilization of cross-linked TG/thyroglobulin in the thyroid follicle lumen. Has also been implicated in tumor invasion and metastasis. The protein is Cathepsin B (CTSB) of Macaca fascicularis (Crab-eating macaque).